The sequence spans 329 residues: Phosphate acyltransferase (329 aa).

Belongs to the PlsX family. As to quaternary structure, homodimer. Probably interacts with PlsY.

Its subcellular location is the cytoplasm. The catalysed reaction is a fatty acyl-[ACP] + phosphate = an acyl phosphate + holo-[ACP]. It functions in the pathway lipid metabolism; phospholipid metabolism. Its function is as follows. Catalyzes the reversible formation of acyl-phosphate (acyl-PO(4)) from acyl-[acyl-carrier-protein] (acyl-ACP). This enzyme utilizes acyl-ACP as fatty acyl donor, but not acyl-CoA. The protein is Phosphate acyltransferase of Campylobacter concisus (strain 13826).